The sequence spans 104 residues: Gastrin (104 aa).

The signal sequence occupies residues 1–21 (MQRLCAYVLIHVLALAACSEA). Positions 22 to 58 (SWKPGFQLQDASSGPGANRGKEPHELDRLGPASHHRR) are excised as a propeptide. A disordered region spans residues 27–67 (FQLQDASSGPGANRGKEPHELDRLGPASHHRRQLGLQGPPH). A compositionally biased stretch (basic and acidic residues) spans 40 to 49 (RGKEPHELDR). Pyrrolidone carboxylic acid; in form big gastrin is present on Q59. Q76 carries the post-translational modification Pyrrolidone carboxylic acid; in form gastrin. Y87 is modified (sulfotyrosine; partial). At F92 the chain carries Phenylalanine amide. S96 bears the Phosphoserine mark. Positions 96-104 (SAEEGDQRP) are excised as a propeptide.

This sequence belongs to the gastrin/cholecystokinin family. Post-translationally, sulfation enhances proteolytic processing, and blocks peptide degradation. Levels of sulfation differ between proteolytically-cleaved gastrins. Thus, gastrin-6 is almost 73% sulfated, whereas the larger gastrins are less than 50% sulfated. Sulfation levels are also tissue-specific.

The protein resides in the secreted. Gastrin stimulates the stomach mucosa to produce and secrete hydrochloric acid and the pancreas to secrete its digestive enzymes. It also stimulates smooth muscle contraction and increases blood circulation and water secretion in the stomach and intestine. This Sus scrofa (Pig) protein is Gastrin (GAST).